A 72-amino-acid polypeptide reads, in one-letter code: Protein SlyX homolog (72 aa).

The protein belongs to the SlyX family.

This Vibrio cholerae serotype O1 (strain ATCC 39541 / Classical Ogawa 395 / O395) protein is Protein SlyX homolog.